The sequence spans 1604 residues: Ubiquitin carboxyl-terminal hydrolase 32 (1604 aa).

3 EF-hand domains span residues 91–126, 228–263, and 264–299; these read KDEE…VDGK, IRPS…CCRG, and PLAE…LLEV. 9 residues coordinate Ca(2+): Asp241, Asn243, Asp245, His247, Glu252, Asp277, Asp279, Asp281, and Glu288. In terms of domain architecture, DUSP spans 369–585; sequence ATPEEEGQII…SNLALPRPVI (217 aa). Positions 734-1567 constitute a USP domain; it reads TGLSNLGNTC…SAYILFYEQQ (834 aa). The active-site Nucleophile is Cys743. Tyr1173 carries the phosphotyrosine modification. Phosphoserine is present on Ser1350. The segment at 1353–1432 is disordered; sequence EEDVLLSKSP…SKENLDTSKE (80 aa). Positions 1360–1370 are enriched in polar residues; it reads KSPSSLSANVT. The segment covering 1371–1399 has biased composition (low complexity); that stretch reads SSPKGSPSSSRKSGASCPSSKNSSPNSSP. Phosphoserine occurs at positions 1372 and 1376. Residues 1415–1424 show a composition bias toward polar residues; that stretch reads GSKNKLSNSK. Phosphoserine is present on Ser1454. Positions 1484-1504 are disordered; sequence SNGQLGNHSEEDSTDDQREET. The span at 1491-1504 shows a compositional bias: basic and acidic residues; that stretch reads HSEEDSTDDQREET. His1526 serves as the catalytic Proton acceptor. Ser1588 carries the phosphoserine modification. At Cys1601 the chain carries Cysteine methyl ester. The S-farnesyl cysteine moiety is linked to residue Cys1601. A propeptide spans 1602–1604 (removed in mature form); the sequence is VLQ.

The protein belongs to the peptidase C19 family.

It is found in the golgi apparatus membrane. The catalysed reaction is Thiol-dependent hydrolysis of ester, thioester, amide, peptide and isopeptide bonds formed by the C-terminal Gly of ubiquitin (a 76-residue protein attached to proteins as an intracellular targeting signal).. Functionally, deubiquitinase that can remove conjugated ubiquitin from target proteins, such as RAB7A and LAMTOR1. Acts as a positive regulator of the mTORC1 signaling by mediating deubiquitination of LAMTOR1, thereby promoting the association between LAMTOR1 and the lysosomal V-ATPase complex and subsequent activation of the mTORC1 complex. In Mus musculus (Mouse), this protein is Ubiquitin carboxyl-terminal hydrolase 32.